Reading from the N-terminus, the 99-residue chain is Large ribosomal subunit protein bL21 (99 aa).

It belongs to the bacterial ribosomal protein bL21 family. Part of the 50S ribosomal subunit. Contacts protein L20.

Its function is as follows. This protein binds to 23S rRNA in the presence of protein L20. This chain is Large ribosomal subunit protein bL21, found in Mesomycoplasma hyopneumoniae (strain 232) (Mycoplasma hyopneumoniae).